A 306-amino-acid polypeptide reads, in one-letter code: Homoserine kinase (306 aa).

95–105 (PHSRGLGSSAA) contributes to the ATP binding site.

Belongs to the GHMP kinase family. Homoserine kinase subfamily.

The protein localises to the cytoplasm. The enzyme catalyses L-homoserine + ATP = O-phospho-L-homoserine + ADP + H(+). The protein operates within amino-acid biosynthesis; L-threonine biosynthesis; L-threonine from L-aspartate: step 4/5. In terms of biological role, catalyzes the ATP-dependent phosphorylation of L-homoserine to L-homoserine phosphate. The sequence is that of Homoserine kinase from Mycobacteroides abscessus (strain ATCC 19977 / DSM 44196 / CCUG 20993 / CIP 104536 / JCM 13569 / NCTC 13031 / TMC 1543 / L948) (Mycobacterium abscessus).